Reading from the N-terminus, the 1597-residue chain is Replicase large subunit (1597 aa).

The Alphavirus-like MT domain maps to 72–280 (SFTHTQQAVH…HSFSNIIKYV (209 aa)). The 160-residue stretch at 791–950 (LVYSDMGKLK…KLVVDEKEDR (160 aa)) folds into the (+)RNA virus helicase ATP-binding domain. 823-830 (GVPGCGKT) is a binding site for ATP. The (+)RNA virus helicase C-terminal domain maps to 951–1103 (RVTLRCPADV…EMYKVESGTQ (153 aa)). The region spanning 1365–1478 (MEILELDISK…YIPKGLDLPD (114 aa)) is the RdRp catalytic domain.

This sequence belongs to the tobamovirus RNA-directed RNA polymerase family. In terms of assembly, heterodimer of a large and a small subunit.

The catalysed reaction is RNA(n) + a ribonucleoside 5'-triphosphate = RNA(n+1) + diphosphate. It catalyses the reaction ATP + H2O = ADP + phosphate + H(+). In terms of biological role, the replicase large subunit is an RNA-dependent RNA polymerase active in viral RNA replication. Functionally, the replicase small subunit is a methyltransferase active in RNA capping and an RNA helicase. It also acts as a suppressor of RNA-mediated gene silencing, also known as post-transcriptional gene silencing (PTGS), a mechanism of plant viral defense that limits the accumulation of viral RNAs. May mediate silencing suppression through either inhibition of HEN1-mediated siRNA or siRNA demethylation. The chain is Replicase large subunit from Brassica napus (Rape).